The primary structure comprises 697 residues: Glycine--tRNA ligase beta subunit (697 aa).

The protein belongs to the class-II aminoacyl-tRNA synthetase family. As to quaternary structure, tetramer of two alpha and two beta subunits.

Its subcellular location is the cytoplasm. The catalysed reaction is tRNA(Gly) + glycine + ATP = glycyl-tRNA(Gly) + AMP + diphosphate. The chain is Glycine--tRNA ligase beta subunit from Cereibacter sphaeroides (strain ATCC 17029 / ATH 2.4.9) (Rhodobacter sphaeroides).